The following is a 145-amino-acid chain: Cystin-1 (145 aa).

The disordered stretch occupies residues 1-129 (MGSGSSRSGR…PEGQSAISYD (129 aa)). G2 carries the N-myristoyl glycine lipid modification. The Ciliary targeting motif motif lies at 29–33 (ASEGG). S116 bears the Phosphoserine mark.

In terms of assembly, interacts (when myristoylated) with UNC119 and UNC119B; interaction is required for localization to cilium. Expressed primarily in the kidney and liver. Expressed at lower levels in the lung, brain and heart.

It localises to the cell projection. Its subcellular location is the cilium membrane. It is found in the cytoplasm. The protein resides in the cytoskeleton. The protein localises to the cilium axoneme. In Mus musculus (Mouse), this protein is Cystin-1 (Cys1).